Here is a 336-residue protein sequence, read N- to C-terminus: Glyceraldehyde-3-phosphate dehydrogenase (336 aa).

NAD(+) contacts are provided by residues 12 to 13 (RI), aspartate 34, arginine 78, and threonine 121. D-glyceraldehyde 3-phosphate-binding positions include 151–153 (SCT), threonine 182, arginine 199, 212–213 (TG), and arginine 235. Cysteine 152 functions as the Nucleophile in the catalytic mechanism. Asparagine 316 provides a ligand contact to NAD(+).

The protein belongs to the glyceraldehyde-3-phosphate dehydrogenase family. In terms of assembly, homotetramer.

Its subcellular location is the cytoplasm. The enzyme catalyses D-glyceraldehyde 3-phosphate + phosphate + NAD(+) = (2R)-3-phospho-glyceroyl phosphate + NADH + H(+). It functions in the pathway carbohydrate degradation; glycolysis; pyruvate from D-glyceraldehyde 3-phosphate: step 1/5. Catalyzes the oxidative phosphorylation of glyceraldehyde 3-phosphate (G3P) to 1,3-bisphosphoglycerate (BPG) using the cofactor NAD. The first reaction step involves the formation of a hemiacetal intermediate between G3P and a cysteine residue, and this hemiacetal intermediate is then oxidized to a thioester, with concomitant reduction of NAD to NADH. The reduced NADH is then exchanged with the second NAD, and the thioester is attacked by a nucleophilic inorganic phosphate to produce BPG. This chain is Glyceraldehyde-3-phosphate dehydrogenase (gap), found in Streptococcus dysgalactiae subsp. equisimilis (Streptococcus equisimilis).